A 387-amino-acid polypeptide reads, in one-letter code: Succinate--CoA ligase [ADP-forming] subunit beta (387 aa).

The ATP-grasp domain occupies 9–244; that stretch reads KQLFAEYGIP…KTQEDETEVL (236 aa). Residues lysine 46, 53 to 55, glycine 102, and glutamate 107 each bind ATP; that span reads GRG. Residues asparagine 199 and aspartate 213 each contribute to the Mg(2+) site. Residues asparagine 264 and 321-323 contribute to the substrate site; that span reads GIV.

It belongs to the succinate/malate CoA ligase beta subunit family. Heterotetramer of two alpha and two beta subunits. Mg(2+) serves as cofactor.

It catalyses the reaction succinate + ATP + CoA = succinyl-CoA + ADP + phosphate. The enzyme catalyses GTP + succinate + CoA = succinyl-CoA + GDP + phosphate. It functions in the pathway carbohydrate metabolism; tricarboxylic acid cycle; succinate from succinyl-CoA (ligase route): step 1/1. Functionally, succinyl-CoA synthetase functions in the citric acid cycle (TCA), coupling the hydrolysis of succinyl-CoA to the synthesis of either ATP or GTP and thus represents the only step of substrate-level phosphorylation in the TCA. The beta subunit provides nucleotide specificity of the enzyme and binds the substrate succinate, while the binding sites for coenzyme A and phosphate are found in the alpha subunit. This chain is Succinate--CoA ligase [ADP-forming] subunit beta, found in Xylella fastidiosa (strain M23).